A 1213-amino-acid polypeptide reads, in one-letter code: DNA-directed RNA polymerase subunit beta (1213 aa).

A disordered region spans residues 1153–1213 (RDMDEDSSEH…ADESDGKVSK (61 aa)). The segment covering 1171-1198 (MAEEQEKKKLAEETGKSENKEDSNETAD) has biased composition (basic and acidic residues).

The protein belongs to the RNA polymerase beta chain family. The RNAP catalytic core consists of 2 alpha, 1 beta, 1 beta' and 1 omega subunit. When a sigma factor is associated with the core the holoenzyme is formed, which can initiate transcription.

It catalyses the reaction RNA(n) + a ribonucleoside 5'-triphosphate = RNA(n+1) + diphosphate. Its function is as follows. DNA-dependent RNA polymerase catalyzes the transcription of DNA into RNA using the four ribonucleoside triphosphates as substrates. This chain is DNA-directed RNA polymerase subunit beta, found in Lactobacillus acidophilus (strain ATCC 700396 / NCK56 / N2 / NCFM).